A 156-amino-acid polypeptide reads, in one-letter code: Small ribosomal subunit protein eS19A (156 aa).

It belongs to the eukaryotic ribosomal protein eS19 family.

This Drosophila melanogaster (Fruit fly) protein is Small ribosomal subunit protein eS19A (RpS19a).